Reading from the N-terminus, the 600-residue chain is Elongation factor 4 (600 aa).

In terms of domain architecture, tr-type G spans 5–187 (KYIRNFSIIA…AIINKLPSPK (183 aa)). GTP contacts are provided by residues 17 to 22 (DHGKST) and 134 to 137 (NKID).

This sequence belongs to the TRAFAC class translation factor GTPase superfamily. Classic translation factor GTPase family. LepA subfamily.

The protein localises to the cell inner membrane. The catalysed reaction is GTP + H2O = GDP + phosphate + H(+). In terms of biological role, required for accurate and efficient protein synthesis under certain stress conditions. May act as a fidelity factor of the translation reaction, by catalyzing a one-codon backward translocation of tRNAs on improperly translocated ribosomes. Back-translocation proceeds from a post-translocation (POST) complex to a pre-translocation (PRE) complex, thus giving elongation factor G a second chance to translocate the tRNAs correctly. Binds to ribosomes in a GTP-dependent manner. In Rickettsia typhi (strain ATCC VR-144 / Wilmington), this protein is Elongation factor 4.